A 189-amino-acid chain; its full sequence is Molybdenum cofactor guanylyltransferase (189 aa).

GTP-binding positions include 12-14 (LAG), Lys-24, Asp-68, and Asp-94. Asp-94 serves as a coordination point for Mg(2+).

Belongs to the MobA family. Monomer. Mg(2+) is required as a cofactor.

Its subcellular location is the cytoplasm. It catalyses the reaction Mo-molybdopterin + GTP + H(+) = Mo-molybdopterin guanine dinucleotide + diphosphate. Its function is as follows. Transfers a GMP moiety from GTP to Mo-molybdopterin (Mo-MPT) cofactor (Moco or molybdenum cofactor) to form Mo-molybdopterin guanine dinucleotide (Mo-MGD) cofactor. In Xanthomonas euvesicatoria pv. vesicatoria (strain 85-10) (Xanthomonas campestris pv. vesicatoria), this protein is Molybdenum cofactor guanylyltransferase.